A 192-amino-acid polypeptide reads, in one-letter code: Cytochrome b-245 light chain (192 aa).

The Cytoplasmic portion of the chain corresponds to 2-7; sequence GQIEWA. The chain crosses the membrane as a helical span at residues 8–30; sequence MWANEQALASGLILITGGIVATA. Over 31-35 the chain is Extracellular; the sequence is GRFTQ. The chain crosses the membrane as a helical span at residues 36 to 53; the sequence is WYFGAYSIAAGVLICLLE. At 54–69 the chain is on the cytoplasmic side; that stretch reads YPRGKRKKGSTMERCG. The stretch at 70-80 is an intramembrane region; sequence QKYLTSVVKLF. At 81–86 the chain is on the cytoplasmic side; the sequence is GPLTRN. The chain crosses the membrane as a helical span at residues 87-104; the sequence is YYVRAALHFLLSVPAGFL. Residue leucine 105 is a topological domain, extracellular. A helical transmembrane segment spans residues 106–126; sequence ATILGTVCLAIASVIYLLAAI. Residues 127 to 192 are Cytoplasmic-facing; sequence RGEQWTPIEP…NPMPVTDEVV (66 aa). The tract at residues 134-192 is disordered; that stretch reads IEPKPKERPQVGGTIKQPPTNPPPRPPAEVRKKPSEGEEEAASAGGPQVNPMPVTDEVV. Position 147 is a phosphothreonine (threonine 147). Residue lysine 149 forms a Glycyl lysine isopeptide (Lys-Gly) (interchain with G-Cter in ubiquitin) linkage. Phosphoserine is present on residues serine 168 and serine 176.

This sequence belongs to the p22phox family. In terms of assembly, component of the phagocyte NADPH oxidase core complex/cytochrome b558 complex, composed of CYBB (heavy chain (beta)) and CYBA (light chain (alpha)). Component of the phagocyte NADPH oxidase complex composed of an obligatory core heterodimer formed by the membrane proteins CYBA and CYBB and the cytosolic regulatory subunits NCF1/p47-phox, NCF2/p67-phox, NCF4/p40-phox and the small GTPase RAC1 or RAC2. Interacts with NCF1 (via SH3 domain). Interacts with SH3PXD2A. Interacts with DUOX1, DUOX2 and TPO. Interacts with NOX4; this interaction mediates superoxide generation. Interacts with calprotectin (S100A8/9). Interacts with GBP7. Interacts with NOXO1. Forms a heterodimer with NOX3 and is essential for activity and cell membrane localization of NOX3. Interacts with NOX1. Post-translationally, ubiquitinated at Lys-149 likely by RNF145. In terms of processing, phosphorylation at Thr-147 enhances NADPH oxidase activity by promoting NCF1/p47-phox binding. In terms of tissue distribution, the strongest level of expression is found in kidney, peritoneal neutrophils and peritoneal macrophages, and a lower level in spleen and small intestine. Very low level of expression can be noted in brain, liver, testis, and heart.

The protein localises to the cell membrane. In terms of biological role, subunit of NADPH oxidase complexes that is required for the NADPH oxidase activity that generates, in various cell types, superoxide from molecular oxygen utilizing NADPH as an electron donor. Subunit of the phagocyte NADPH oxidase complex that mediates the transfer of electrons from cytosolic NADPH to O2 to produce the superoxide anion (O2(-)). In the activated complex, electrons are first transferred from NADPH to flavin adenine dinucleotide (FAD) and subsequently transferred via two heme molecules to molecular oxygen, producing superoxide through an outer-sphere reaction. Activation of the NADPH oxidase complex is initiated by the assembly of cytosolic subunits of the NADPH oxidase complex with the core NADPH oxidase complex to form a complex at the plasma membrane or phagosomal membrane. This activation process is initiated by phosphorylation dependent binding of the cytosolic NCF1/p47-phox subunit to the C-terminus of CYBA/p22-phox. Aassociates with NOX3 to form a functional NADPH oxidase constitutively generating superoxide. In Mus musculus (Mouse), this protein is Cytochrome b-245 light chain.